The following is a 242-amino-acid chain: EF-hand domain-containing protein D2 (242 aa).

The tract at residues 1–53 (MATDELASKLSRRLQMEGEGGGEAPEQPGLNGAAAAAAAAGAPDETAEALGSA) is disordered. Ala-2 carries the post-translational modification N-acetylalanine. Residue Ser-11 is modified to Phosphoserine. The segment covering 32-42 (GAAAAAAAAGA) has biased composition (low complexity). Ser-76 and Ser-78 each carry phosphoserine. Position 85 is a phosphotyrosine (Tyr-85). 2 EF-hand domains span residues 94-129 (KQIK…LGAP) and 130-165 (QTHL…AAAG). Asp-107, Asp-111, Glu-118, Asp-143, Asp-145, Asp-147, Lys-149, and Glu-154 together coordinate Ca(2+). Lys-235 carries the post-translational modification N6-acetyllysine.

As to quaternary structure, interacts with CASP9; with inactive form.

Its subcellular location is the membrane raft. May regulate B-cell receptor (BCR)-induced immature and primary B-cell apoptosis. Plays a role as negative regulator of the canonical NF-kappa-B-activating branch. Controls spontaneous apoptosis through the regulation of BCL2L1 abundance. The chain is EF-hand domain-containing protein D2 (EFHD2) from Bos taurus (Bovine).